Here is a 335-residue protein sequence, read N- to C-terminus: DNA-directed RNA polymerase subunit alpha (335 aa).

Residues 1–233 form an alpha N-terminal domain (alpha-NTD) region; it reads MTRTANEFLT…QQIAIFVDLQ (233 aa). The tract at residues 247-335 is alpha C-terminal domain (alpha-CTD); it reads VDPILLRPVD…MDDRFAYRSR (89 aa).

The protein belongs to the RNA polymerase alpha chain family. In terms of assembly, homodimer. The RNAP catalytic core consists of 2 alpha, 1 beta, 1 beta' and 1 omega subunit. When a sigma factor is associated with the core the holoenzyme is formed, which can initiate transcription.

It catalyses the reaction RNA(n) + a ribonucleoside 5'-triphosphate = RNA(n+1) + diphosphate. Its function is as follows. DNA-dependent RNA polymerase catalyzes the transcription of DNA into RNA using the four ribonucleoside triphosphates as substrates. The sequence is that of DNA-directed RNA polymerase subunit alpha from Acinetobacter baylyi (strain ATCC 33305 / BD413 / ADP1).